Here is a 282-residue protein sequence, read N- to C-terminus: Elongation factor Ts (282 aa).

Residues 79–82 are involved in Mg(2+) ion dislocation from EF-Tu; that stretch reads TDFV.

It belongs to the EF-Ts family.

Its subcellular location is the cytoplasm. Functionally, associates with the EF-Tu.GDP complex and induces the exchange of GDP to GTP. It remains bound to the aminoacyl-tRNA.EF-Tu.GTP complex up to the GTP hydrolysis stage on the ribosome. The protein is Elongation factor Ts of Shewanella sediminis (strain HAW-EB3).